Here is a 191-residue protein sequence, read N- to C-terminus: Molybdenum cofactor guanylyltransferase (191 aa).

Residues 13 to 15 (LAG), lysine 26, aspartate 72, and aspartate 102 each bind GTP. Position 102 (aspartate 102) interacts with Mg(2+).

This sequence belongs to the MobA family. In terms of assembly, monomer. Mg(2+) serves as cofactor.

Its subcellular location is the cytoplasm. The catalysed reaction is Mo-molybdopterin + GTP + H(+) = Mo-molybdopterin guanine dinucleotide + diphosphate. Transfers a GMP moiety from GTP to Mo-molybdopterin (Mo-MPT) cofactor (Moco or molybdenum cofactor) to form Mo-molybdopterin guanine dinucleotide (Mo-MGD) cofactor. The protein is Molybdenum cofactor guanylyltransferase of Pseudomonas putida (strain ATCC 47054 / DSM 6125 / CFBP 8728 / NCIMB 11950 / KT2440).